Reading from the N-terminus, the 379-residue chain is Chaperone protein DnaJ (379 aa).

Residues 7–72 (DYYEVLGVDK…KKRSMYDQFG (66 aa)) form the J domain. The CR-type zinc finger occupies 147–225 (GKKAELSYTR…CGGNGLERKK (79 aa)). Positions 160, 163, 177, 180, 199, 202, 213, and 216 each coordinate Zn(2+). CXXCXGXG motif repeat units lie at residues 160–167 (CSECHGTG), 177–184 (CPDCKGTG), 199–206 (CPTCGGEG), and 213–220 (CKKCGGNG).

It belongs to the DnaJ family. As to quaternary structure, homodimer. Zn(2+) serves as cofactor.

The protein resides in the cytoplasm. Participates actively in the response to hyperosmotic and heat shock by preventing the aggregation of stress-denatured proteins and by disaggregating proteins, also in an autonomous, DnaK-independent fashion. Unfolded proteins bind initially to DnaJ; upon interaction with the DnaJ-bound protein, DnaK hydrolyzes its bound ATP, resulting in the formation of a stable complex. GrpE releases ADP from DnaK; ATP binding to DnaK triggers the release of the substrate protein, thus completing the reaction cycle. Several rounds of ATP-dependent interactions between DnaJ, DnaK and GrpE are required for fully efficient folding. Also involved, together with DnaK and GrpE, in the DNA replication of plasmids through activation of initiation proteins. The polypeptide is Chaperone protein DnaJ (Treponema denticola (strain ATCC 35405 / DSM 14222 / CIP 103919 / JCM 8153 / KCTC 15104)).